Reading from the N-terminus, the 279-residue chain is Thymidylate synthase (279 aa).

141–142 (RR) is a binding site for dUMP. Catalysis depends on C161, which acts as the Nucleophile. Residues 181 to 184 (RSND), N192, and 222 to 224 (HVY) contribute to the dUMP site. A (6R)-5,10-methylene-5,6,7,8-tetrahydrofolate-binding site is contributed by D184. A278 contacts (6R)-5,10-methylene-5,6,7,8-tetrahydrofolate.

Belongs to the thymidylate synthase family. Homodimer.

It catalyses the reaction dUMP + (6R)-5,10-methylene-5,6,7,8-tetrahydrofolate = 7,8-dihydrofolate + dTMP. The protein operates within pyrimidine metabolism; dTTP biosynthesis. In terms of biological role, provides the sole de novo source of dTMP for DNA biosynthesis. This is Thymidylate synthase (thyP3) from Bacillus subtilis (Bacteriophage phi-3T).